A 224-amino-acid polypeptide reads, in one-letter code: Ribosomal RNA large subunit methyltransferase E (224 aa).

Residues glycine 60, tryptophan 62, aspartate 93, aspartate 109, and aspartate 137 each coordinate S-adenosyl-L-methionine. Lysine 177 serves as the catalytic Proton acceptor.

It belongs to the class I-like SAM-binding methyltransferase superfamily. RNA methyltransferase RlmE family.

The protein resides in the cytoplasm. The catalysed reaction is uridine(2552) in 23S rRNA + S-adenosyl-L-methionine = 2'-O-methyluridine(2552) in 23S rRNA + S-adenosyl-L-homocysteine + H(+). Specifically methylates the uridine in position 2552 of 23S rRNA at the 2'-O position of the ribose in the fully assembled 50S ribosomal subunit. The protein is Ribosomal RNA large subunit methyltransferase E of Polynucleobacter asymbioticus (strain DSM 18221 / CIP 109841 / QLW-P1DMWA-1) (Polynucleobacter necessarius subsp. asymbioticus).